The chain runs to 86 residues: Putative membrane protein insertion efficiency factor (86 aa).

The protein belongs to the UPF0161 family.

Its subcellular location is the cell inner membrane. Its function is as follows. Could be involved in insertion of integral membrane proteins into the membrane. The protein is Putative membrane protein insertion efficiency factor of Pseudomonas aeruginosa (strain LESB58).